A 144-amino-acid polypeptide reads, in one-letter code: Putative pre-16S rRNA nuclease (144 aa).

This sequence belongs to the YqgF nuclease family.

Its subcellular location is the cytoplasm. Functionally, could be a nuclease involved in processing of the 5'-end of pre-16S rRNA. This Wigglesworthia glossinidia brevipalpis protein is Putative pre-16S rRNA nuclease.